The chain runs to 323 residues: Palmitoyltransferase ZDHHC20-B (323 aa).

Over 1–14 the chain is Cytoplasmic; the sequence is MAPTHVLRCCQRGL. Residues 15 to 35 form a helical membrane-spanning segment; the sequence is AWIPVIFIALVVCWSYYAYVV. Over 36–41 the chain is Lumenal; that stretch reads ELCLLV. The helical transmembrane segment at 42–62 threads the bilayer; the sequence is YLVVFHLSFVMFVWSYWKTIF. At 63 to 157 the chain is on the cytoplasmic side; it reads TKPANPSKEF…NNCVGFSNYK (95 aa). In terms of domain architecture, DHHC spans 114–164; it reads RYCDRCQVIKPDRCHHCSACDMCVLKMDHHCPWVNNCVGFSNYKFFILFLT. Cysteine 144 serves as the catalytic S-palmitoyl cysteine intermediate. Residues 158 to 178 form a helical membrane-spanning segment; that stretch reads FFILFLTYSLVYCLFIAASVL. Topologically, residues 179 to 195 are lumenal; the sequence is QYFIKFWTSDLPESHAK. The helical transmembrane segment at 196–219 threads the bilayer; the sequence is FHVLFLFFVAAMFCISILSLFTYH. The Cytoplasmic segment spans residues 220 to 323; that stretch reads LWLVGKNRST…KQAKKKKTDE (104 aa).

It belongs to the DHHC palmitoyltransferase family.

It localises to the golgi apparatus membrane. It is found in the cell membrane. The protein resides in the cytoplasm. The protein localises to the perinuclear region. Its subcellular location is the endoplasmic reticulum membrane. It localises to the endoplasmic reticulum-Golgi intermediate compartment membrane. It carries out the reaction L-cysteinyl-[protein] + hexadecanoyl-CoA = S-hexadecanoyl-L-cysteinyl-[protein] + CoA. The catalysed reaction is L-cysteinyl-[protein] + tetradecanoyl-CoA = S-tetradecanoyl-L-cysteinyl-[protein] + CoA. The enzyme catalyses L-cysteinyl-[protein] + octadecanoyl-CoA = S-octadecanoyl-L-cysteinyl-[protein] + CoA. Functionally, palmitoyltransferase that could catalyze the addition of palmitate onto various protein substrates. Catalyzes palmitoylation of Cys residues on protein substrates and has a preference for acyl-CoA with C16 fatty acid chains but may also utilize acyl-CoA with C14 and C18 fatty acid chains. The protein is Palmitoyltransferase ZDHHC20-B (zdhhc20b) of Danio rerio (Zebrafish).